The primary structure comprises 82 residues: Small ribosomal subunit protein bS18 (82 aa).

The tract at residues 1-24 (MKRTNMKKARMEQSRRPKKNPLKA) is disordered.

It belongs to the bacterial ribosomal protein bS18 family. As to quaternary structure, part of the 30S ribosomal subunit. Forms a tight heterodimer with protein bS6.

Binds as a heterodimer with protein bS6 to the central domain of the 16S rRNA, where it helps stabilize the platform of the 30S subunit. This is Small ribosomal subunit protein bS18 from Corynebacterium jeikeium (strain K411).